We begin with the raw amino-acid sequence, 393 residues long: NAD(P)H-quinone oxidoreductase subunit H, chloroplastic (393 aa).

This sequence belongs to the complex I 49 kDa subunit family. In terms of assembly, NDH is composed of at least 16 different subunits, 5 of which are encoded in the nucleus.

It is found in the plastid. The protein localises to the chloroplast thylakoid membrane. It catalyses the reaction a plastoquinone + NADH + (n+1) H(+)(in) = a plastoquinol + NAD(+) + n H(+)(out). The catalysed reaction is a plastoquinone + NADPH + (n+1) H(+)(in) = a plastoquinol + NADP(+) + n H(+)(out). Functionally, NDH shuttles electrons from NAD(P)H:plastoquinone, via FMN and iron-sulfur (Fe-S) centers, to quinones in the photosynthetic chain and possibly in a chloroplast respiratory chain. The immediate electron acceptor for the enzyme in this species is believed to be plastoquinone. Couples the redox reaction to proton translocation, and thus conserves the redox energy in a proton gradient. This is NAD(P)H-quinone oxidoreductase subunit H, chloroplastic from Psilotum nudum (Whisk fern).